A 187-amino-acid chain; its full sequence is Peptidyl-tRNA hydrolase (187 aa).

Tyrosine 14 lines the tRNA pocket. The active-site Proton acceptor is histidine 19. Positions 64, 66, and 112 each coordinate tRNA.

Belongs to the PTH family. Monomer.

The protein resides in the cytoplasm. It carries out the reaction an N-acyl-L-alpha-aminoacyl-tRNA + H2O = an N-acyl-L-amino acid + a tRNA + H(+). Its function is as follows. Hydrolyzes ribosome-free peptidyl-tRNAs (with 1 or more amino acids incorporated), which drop off the ribosome during protein synthesis, or as a result of ribosome stalling. In terms of biological role, catalyzes the release of premature peptidyl moieties from peptidyl-tRNA molecules trapped in stalled 50S ribosomal subunits, and thus maintains levels of free tRNAs and 50S ribosomes. This Clostridium acetobutylicum (strain ATCC 824 / DSM 792 / JCM 1419 / IAM 19013 / LMG 5710 / NBRC 13948 / NRRL B-527 / VKM B-1787 / 2291 / W) protein is Peptidyl-tRNA hydrolase.